Here is a 118-residue protein sequence, read N- to C-terminus: Large ribosomal subunit protein bL19 (118 aa).

This sequence belongs to the bacterial ribosomal protein bL19 family.

This protein is located at the 30S-50S ribosomal subunit interface and may play a role in the structure and function of the aminoacyl-tRNA binding site. In Campylobacter hominis (strain ATCC BAA-381 / DSM 21671 / CCUG 45161 / LMG 19568 / NCTC 13146 / CH001A), this protein is Large ribosomal subunit protein bL19.